A 628-amino-acid chain; its full sequence is Probable potassium transport system protein Kup (628 aa).

A run of 12 helical transmembrane segments spans residues 15–35 (FAAE…SPLY), 49–69 (FLGG…ILSV), 106–126 (WYLL…GVLT), 141–161 (ISPE…LAVF), 174–194 (FFGP…VYGI), 210–230 (IMLM…CFLA), 254–274 (LFVA…ILLV), 295–315 (LLFL…TGVF), 343–363 (IYVG…VLGF), 369–389 (LASA…ILFI), 398–418 (WPAP…FAFA), and 425–445 (IHDG…VMVS).

It belongs to the HAK/KUP transporter (TC 2.A.72) family.

Its subcellular location is the cell inner membrane. It carries out the reaction K(+)(in) + H(+)(in) = K(+)(out) + H(+)(out). Transport of potassium into the cell. Likely operates as a K(+):H(+) symporter. The sequence is that of Probable potassium transport system protein Kup from Xanthobacter autotrophicus (strain ATCC BAA-1158 / Py2).